The primary structure comprises 667 residues: DNA ligase (667 aa).

NAD(+) contacts are provided by residues 32–36 (DSEYD), 81–82 (SL), and glutamate 110. The N6-AMP-lysine intermediate role is filled by lysine 112. Residues arginine 133, glutamate 167, lysine 283, and lysine 307 each contribute to the NAD(+) site. Residues cysteine 401, cysteine 404, cysteine 419, and cysteine 424 each contribute to the Zn(2+) site. The region spanning 586–667 (EGHPEFSGKT…FVDKQNELNS (82 aa)) is the BRCT domain.

It belongs to the NAD-dependent DNA ligase family. LigA subfamily. Mg(2+) is required as a cofactor. Mn(2+) serves as cofactor.

It catalyses the reaction NAD(+) + (deoxyribonucleotide)n-3'-hydroxyl + 5'-phospho-(deoxyribonucleotide)m = (deoxyribonucleotide)n+m + AMP + beta-nicotinamide D-nucleotide.. Functionally, DNA ligase that catalyzes the formation of phosphodiester linkages between 5'-phosphoryl and 3'-hydroxyl groups in double-stranded DNA using NAD as a coenzyme and as the energy source for the reaction. It is essential for DNA replication and repair of damaged DNA. The protein is DNA ligase of Staphylococcus aureus (strain USA300).